A 161-amino-acid chain; its full sequence is Dihydrofolate reductase (161 aa).

In terms of domain architecture, DHFR spans 2 to 161 (KISLISAISN…YNFCFEILSR (160 aa)). 6 to 8 (ISA) is a binding site for substrate. Residues 7-8 (SA) and 15-20 (IGHNNK) each bind NADP(+). Aspartate 28 contributes to the substrate binding site. Residue 44-47 (GRLT) participates in NADP(+) binding. Arginine 59 contributes to the substrate binding site. Residues 64-66 (ISH) and 96-101 (IGGSKI) each bind NADP(+). Threonine 115 serves as a coordination point for substrate.

This sequence belongs to the dihydrofolate reductase family.

The catalysed reaction is (6S)-5,6,7,8-tetrahydrofolate + NADP(+) = 7,8-dihydrofolate + NADPH + H(+). It participates in cofactor biosynthesis; tetrahydrofolate biosynthesis; 5,6,7,8-tetrahydrofolate from 7,8-dihydrofolate: step 1/1. Functionally, key enzyme in folate metabolism. Catalyzes an essential reaction for de novo glycine and purine synthesis, and for DNA precursor synthesis. This Buchnera aphidicola subsp. Schizaphis graminum (strain Sg) protein is Dihydrofolate reductase (folA).